The sequence spans 374 residues: Queuine tRNA-ribosyltransferase (374 aa).

The active-site Proton acceptor is the aspartate 89. Substrate contacts are provided by residues 89-93 (DSGGF), aspartate 143, glutamine 187, and glycine 214. The RNA binding stretch occupies residues 245 to 251 (GVGKPED). The active-site Nucleophile is the aspartate 264. Residues 269–273 (TRNAR) are RNA binding; important for wobble base 34 recognition. Cysteine 302, cysteine 304, cysteine 307, and histidine 333 together coordinate Zn(2+).

The protein belongs to the queuine tRNA-ribosyltransferase family. As to quaternary structure, homodimer. Within each dimer, one monomer is responsible for RNA recognition and catalysis, while the other monomer binds to the replacement base PreQ1. Zn(2+) serves as cofactor.

The enzyme catalyses 7-aminomethyl-7-carbaguanine + guanosine(34) in tRNA = 7-aminomethyl-7-carbaguanosine(34) in tRNA + guanine. Its pathway is tRNA modification; tRNA-queuosine biosynthesis. Functionally, catalyzes the base-exchange of a guanine (G) residue with the queuine precursor 7-aminomethyl-7-deazaguanine (PreQ1) at position 34 (anticodon wobble position) in tRNAs with GU(N) anticodons (tRNA-Asp, -Asn, -His and -Tyr). Catalysis occurs through a double-displacement mechanism. The nucleophile active site attacks the C1' of nucleotide 34 to detach the guanine base from the RNA, forming a covalent enzyme-RNA intermediate. The proton acceptor active site deprotonates the incoming PreQ1, allowing a nucleophilic attack on the C1' of the ribose to form the product. After dissociation, two additional enzymatic reactions on the tRNA convert PreQ1 to queuine (Q), resulting in the hypermodified nucleoside queuosine (7-(((4,5-cis-dihydroxy-2-cyclopenten-1-yl)amino)methyl)-7-deazaguanosine). In Photorhabdus laumondii subsp. laumondii (strain DSM 15139 / CIP 105565 / TT01) (Photorhabdus luminescens subsp. laumondii), this protein is Queuine tRNA-ribosyltransferase.